A 293-amino-acid polypeptide reads, in one-letter code: Phosphatidate cytidylyltransferase (293 aa).

8 helical membrane-spanning segments follow: residues 6–26, 51–71, 73–93, 97–117, 157–177, 195–215, 218–238, and 273–293; these read IISAVIGIALAFSLLILGGWY, IAPAAKTTMVLSLMLLLSATV, PHLTDAFFPLTGALICFYLLF, MATIADISTSLLGLFYGGYLP, LLVTILAFACIWAADIGAYIM, VEGSLWGVGGSLLVGVLGAWY, WPYWEITGALLGLLIGIVSLL, and VFTAPLVYYFVVLLLPVLNNL.

Belongs to the CDS family.

Its subcellular location is the cell membrane. It carries out the reaction a 1,2-diacyl-sn-glycero-3-phosphate + CTP + H(+) = a CDP-1,2-diacyl-sn-glycerol + diphosphate. The protein operates within phospholipid metabolism; CDP-diacylglycerol biosynthesis; CDP-diacylglycerol from sn-glycerol 3-phosphate: step 3/3. This Synechocystis sp. (strain ATCC 27184 / PCC 6803 / Kazusa) protein is Phosphatidate cytidylyltransferase (cdsA).